The sequence spans 424 residues: Arogenate dehydratase 1 (424 aa).

Residues 1–52 (MQSLTPSSGVNLKSIIRKTSLPPGQTRFITGRVIKCGYQVDSANTVNTAGAP) constitute a chloroplast transit peptide. Residues 131–308 (RVAYQGVPGA…NVTRFVMLAR (178 aa)) enclose the Prephenate dehydratase domain. The ACT domain maps to 321 to 412 (TSIVFAHEGT…SFLRVLGSYP (92 aa)).

Mostly expressed in flowers, especially in petals (corollas and tubes), and, at low levels, in roots, stems, leaves, pistils, stamens, ovaries and sepals.

It localises to the plastid. The protein localises to the chloroplast stroma. The catalysed reaction is L-arogenate + H(+) = L-phenylalanine + CO2 + H2O. The protein operates within amino-acid biosynthesis; L-phenylalanine biosynthesis; L-phenylalanine from L-arogenate: step 1/1. In terms of biological role, converts L-arogenate produced from the shikimate-chorismate pathway into phenylalanine (Phe). Involved in floral volatile benzenoids and phenylpropanoids (FVBP) production. The chain is Arogenate dehydratase 1 from Petunia hybrida (Petunia).